The chain runs to 514 residues: 2,3-bisphosphoglycerate-independent phosphoglycerate mutase (514 aa).

Residues D13 and S63 each contribute to the Mn(2+) site. The active-site Phosphoserine intermediate is the S63. Residues H124, 154–155 (RD), R186, R192, 258–261 (RADR), and K332 each bind substrate. D399, H403, D440, H441, and H459 together coordinate Mn(2+).

The protein belongs to the BPG-independent phosphoglycerate mutase family. Monomer. The cofactor is Mn(2+).

It carries out the reaction (2R)-2-phosphoglycerate = (2R)-3-phosphoglycerate. The protein operates within carbohydrate degradation; glycolysis; pyruvate from D-glyceraldehyde 3-phosphate: step 3/5. Functionally, catalyzes the interconversion of 2-phosphoglycerate and 3-phosphoglycerate. The chain is 2,3-bisphosphoglycerate-independent phosphoglycerate mutase from Legionella pneumophila (strain Paris).